A 722-amino-acid chain; its full sequence is Putative tyrosine-protein kinase in cps region (722 aa).

The next 2 membrane-spanning stretches (helical) occupy residues 31–53 (IIIA…ATPI) and 427–449 (IVVL…VRIL).

It belongs to the etk/wzc family. In terms of processing, autophosphorylated on tyrosine residue(s).

The protein resides in the cell inner membrane. The enzyme catalyses L-tyrosyl-[protein] + ATP = O-phospho-L-tyrosyl-[protein] + ADP + H(+). Its pathway is glycan metabolism; exopolysaccharide biosynthesis. The sequence is that of Putative tyrosine-protein kinase in cps region from Klebsiella pneumoniae.